The sequence spans 507 residues: ATP synthase subunit alpha, chloroplastic (507 aa).

An ATP-binding site is contributed by 170-177 (GDRQTGKT).

Belongs to the ATPase alpha/beta chains family. As to quaternary structure, F-type ATPases have 2 components, CF(1) - the catalytic core - and CF(0) - the membrane proton channel. CF(1) has five subunits: alpha(3), beta(3), gamma(1), delta(1), epsilon(1). CF(0) has four main subunits: a, b, b' and c.

The protein resides in the plastid. It is found in the chloroplast thylakoid membrane. The enzyme catalyses ATP + H2O + 4 H(+)(in) = ADP + phosphate + 5 H(+)(out). Its function is as follows. Produces ATP from ADP in the presence of a proton gradient across the membrane. The alpha chain is a regulatory subunit. This Cucumis sativus (Cucumber) protein is ATP synthase subunit alpha, chloroplastic.